Here is a 529-residue protein sequence, read N- to C-terminus: Glutamyl-tRNA reductase (529 aa).

47–50 contacts substrate; it reads TCNR. Cys-48 serves as the catalytic Nucleophile. Residues 56-80 are disordered; sequence SPRQQAPAPPRPGSAPPPSDEELSR. Pro residues predominate over residues 62-73; sequence PAPPRPGSAPPP. Residues Ser-125, 130–132, and Gln-136 each bind substrate; that span reads EPQ. 205–210 contacts NADP(+); that stretch reads GAGDMA. A disordered region spans residues 454-505; the sequence is RGAVDGPPTPRSARGAAPPASGARGGGSPRHADPRPQAAEDNGVYARQPGGR. The segment covering 464-475 has biased composition (low complexity); that stretch reads RSARGAAPPASG.

It belongs to the glutamyl-tRNA reductase family. Homodimer.

It catalyses the reaction (S)-4-amino-5-oxopentanoate + tRNA(Glu) + NADP(+) = L-glutamyl-tRNA(Glu) + NADPH + H(+). It functions in the pathway porphyrin-containing compound metabolism; protoporphyrin-IX biosynthesis; 5-aminolevulinate from L-glutamyl-tRNA(Glu): step 1/2. Its function is as follows. Catalyzes the NADPH-dependent reduction of glutamyl-tRNA(Glu) to glutamate 1-semialdehyde (GSA). This is Glutamyl-tRNA reductase from Sorangium cellulosum (strain So ce56) (Polyangium cellulosum (strain So ce56)).